The following is a 286-amino-acid chain: Urease accessory protein UreD (286 aa).

The protein belongs to the UreD family. UreD, UreF and UreG form a complex that acts as a GTP-hydrolysis-dependent molecular chaperone, activating the urease apoprotein by helping to assemble the nickel containing metallocenter of UreC. The UreE protein probably delivers the nickel.

Its subcellular location is the cytoplasm. Required for maturation of urease via the functional incorporation of the urease nickel metallocenter. The sequence is that of Urease accessory protein UreD from Rhodopseudomonas palustris (strain BisA53).